A 212-amino-acid chain; its full sequence is Ropporin-1B (212 aa).

One can recognise an RIIa domain in the interval 12-49; it reads PELPKMLKEFAKAAIRAQPQDLIQWGADYFEALSRGET. S56 is subject to Phosphoserine. The tract at residues 209–212 is interaction with RHPN1; the sequence is VWLE.

The protein belongs to the ropporin family. In terms of assembly, homodimer. Interacts with RHPN1. May interact with SPA17. Interacts with AKAP3. Interacts with FSCB; the interaction increases upon spermatozoa capacitation conditions. Sumoylated, sumoylation decreases upon spermatozoa capacitation conditions.

Its subcellular location is the cell projection. It localises to the cilium. The protein localises to the flagellum. Functionally, important for male fertility. With ROPN1L, involved in fibrous sheath integrity and sperm motility, plays a role in PKA-dependent signaling processes required for spermatozoa capacitation. This Homo sapiens (Human) protein is Ropporin-1B (ROPN1B).